Reading from the N-terminus, the 542-residue chain is Glucans biosynthesis protein D (542 aa).

Residues 1-31 (MHRRNLLKASMAIAAYTGLSATGLLASRAWA) constitute a signal peptide (tat-type signal).

It belongs to the OpgD/OpgG family. Post-translationally, predicted to be exported by the Tat system. The position of the signal peptide cleavage has not been experimentally proven.

Its subcellular location is the periplasm. It functions in the pathway glycan metabolism; osmoregulated periplasmic glucan (OPG) biosynthesis. In terms of biological role, probably involved in the control of the structural glucose backbone of osmoregulated periplasmic glucans (OPGs). This Pseudomonas fluorescens (strain Pf0-1) protein is Glucans biosynthesis protein D.